We begin with the raw amino-acid sequence, 115 residues long: NAD(P)H-quinone oxidoreductase subunit M (115 aa).

Belongs to the complex I NdhM subunit family. As to quaternary structure, NDH-1 can be composed of about 15 different subunits; different subcomplexes with different compositions have been identified which probably have different functions.

Its subcellular location is the cellular thylakoid membrane. The catalysed reaction is a plastoquinone + NADH + (n+1) H(+)(in) = a plastoquinol + NAD(+) + n H(+)(out). It catalyses the reaction a plastoquinone + NADPH + (n+1) H(+)(in) = a plastoquinol + NADP(+) + n H(+)(out). In terms of biological role, NDH-1 shuttles electrons from an unknown electron donor, via FMN and iron-sulfur (Fe-S) centers, to quinones in the respiratory and/or the photosynthetic chain. The immediate electron acceptor for the enzyme in this species is believed to be plastoquinone. Couples the redox reaction to proton translocation, and thus conserves the redox energy in a proton gradient. Cyanobacterial NDH-1 also plays a role in inorganic carbon-concentration. This Prochlorococcus marinus (strain NATL2A) protein is NAD(P)H-quinone oxidoreductase subunit M.